The following is a 269-amino-acid chain: Cytochrome c oxidase subunit 3 (269 aa).

7 consecutive transmembrane segments (helical) span residues 21 to 41, 45 to 65, 90 to 110, 138 to 160, 167 to 187, 205 to 225, and 247 to 267; these read PWPM…GLTM, IGNM…SVFW, GFLL…WAYF, PLLN…HALI, ALSG…CQYI, FYAG…MLII, and ILYC…FYWW.

Belongs to the cytochrome c oxidase subunit 3 family. Component of the cytochrome c oxidase (complex IV, CIV), a multisubunit enzyme composed of a catalytic core of 3 subunits and several supernumerary subunits. The complex exists as a monomer or a dimer and forms supercomplexes (SCs) in the inner mitochondrial membrane with ubiquinol-cytochrome c oxidoreductase (cytochrome b-c1 complex, complex III, CIII).

It localises to the mitochondrion inner membrane. It catalyses the reaction 4 Fe(II)-[cytochrome c] + O2 + 8 H(+)(in) = 4 Fe(III)-[cytochrome c] + 2 H2O + 4 H(+)(out). Its function is as follows. Component of the cytochrome c oxidase, the last enzyme in the mitochondrial electron transport chain which drives oxidative phosphorylation. The respiratory chain contains 3 multisubunit complexes succinate dehydrogenase (complex II, CII), ubiquinol-cytochrome c oxidoreductase (cytochrome b-c1 complex, complex III, CIII) and cytochrome c oxidase (complex IV, CIV), that cooperate to transfer electrons derived from NADH and succinate to molecular oxygen, creating an electrochemical gradient over the inner membrane that drives transmembrane transport and the ATP synthase. Cytochrome c oxidase is the component of the respiratory chain that catalyzes the reduction of oxygen to water. Electrons originating from reduced cytochrome c in the intermembrane space (IMS) are transferred via the dinuclear copper A center (CU(A)) of subunit 2 and heme A of subunit 1 to the active site in subunit 1, a binuclear center (BNC) formed by heme A3 and copper B (CU(B)). The BNC reduces molecular oxygen to 2 water molecules using 4 electrons from cytochrome c in the IMS and 4 protons from the mitochondrial matrix. The protein is Cytochrome c oxidase subunit 3 (COX3) of Candida glabrata (strain ATCC 2001 / BCRC 20586 / JCM 3761 / NBRC 0622 / NRRL Y-65 / CBS 138) (Yeast).